The sequence spans 225 residues: Cardiotrophin-like cytokine factor 1 (225 aa).

A signal peptide spans 1–27 (MDLRAGDSWGMLACLCTVLWHLPAVPA). A glycan (N-linked (GlcNAc...) asparagine) is linked at Asn29.

Belongs to the IL-6 superfamily. Forms a heteromeric complex with cardiotrophin-like cytokine CRLF1/CLF-1; the CRLF1-CLCF1 complex is a ligand for the ciliary neurotrophic factor receptor/CNTFR. The CRLF1-CLCF1 heterodimer binds SORL1 (via N-terminal ectodomain); within this complex, the interaction is mediated predominantly by the CRLF1 moiety. The tripartite signaling complex formed by CRLF1, CLCF1 and CNTFR also binds SORL1.

Its subcellular location is the secreted. In terms of biological role, in complex with CRLF1, forms a heterodimeric neurotropic cytokine that plays a crucial role during neuronal development. Also stimulates B-cells. Binds to and activates the ILST/gp130 receptor. This is Cardiotrophin-like cytokine factor 1 (Clcf1) from Mus musculus (Mouse).